The primary structure comprises 294 residues: Cytidine deaminase (294 aa).

2 consecutive CMP/dCMP-type deaminase domains span residues 48-168 and 186-294; these read DEDA…FGPK and LTGD…VLLA. 89–91 lines the substrate pocket; the sequence is NME. His-102 provides a ligand contact to Zn(2+). The active-site Proton donor is the Glu-104. 2 residues coordinate Zn(2+): Cys-129 and Cys-132.

It belongs to the cytidine and deoxycytidylate deaminase family. As to quaternary structure, homodimer. Requires Zn(2+) as cofactor.

The enzyme catalyses cytidine + H2O + H(+) = uridine + NH4(+). The catalysed reaction is 2'-deoxycytidine + H2O + H(+) = 2'-deoxyuridine + NH4(+). This enzyme scavenges exogenous and endogenous cytidine and 2'-deoxycytidine for UMP synthesis. The protein is Cytidine deaminase of Escherichia coli O17:K52:H18 (strain UMN026 / ExPEC).